Here is a 353-residue protein sequence, read N- to C-terminus: Photosystem II protein D1 (353 aa).

N-acetylthreonine is present on T2. T2 is modified (phosphothreonine). 3 helical membrane passes run 29–46 (YIGWFGVLMIPTLLTATS), 118–133 (HFLLGVACYMGREWEL), and 142–156 (WIAVAYSAPVAAATA). H118 provides a ligand contact to chlorophyll a. A pheophytin a-binding site is contributed by Y126. [CaMn4O5] cluster contacts are provided by D170 and E189. Residues 197–218 (FHMLGVAGVFGGSLFSAMHGSL) form a helical membrane-spanning segment. Position 198 (H198) interacts with chlorophyll a. A quinone-binding positions include H215 and 264–265 (SF). H215 is a Fe cation binding site. H272 provides a ligand contact to Fe cation. Residues 274–288 (FLAAWPVVGIWFTAL) form a helical membrane-spanning segment. Residues H332, E333, D342, and A344 each coordinate [CaMn4O5] cluster. The propeptide occupies 345–353 (AVEAPSING).

The protein belongs to the reaction center PufL/M/PsbA/D family. In terms of assembly, PSII is composed of 1 copy each of membrane proteins PsbA, PsbB, PsbC, PsbD, PsbE, PsbF, PsbH, PsbI, PsbJ, PsbK, PsbL, PsbM, PsbT, PsbX, PsbY, PsbZ, Psb30/Ycf12, at least 3 peripheral proteins of the oxygen-evolving complex and a large number of cofactors. It forms dimeric complexes. The D1/D2 heterodimer binds P680, chlorophylls that are the primary electron donor of PSII, and subsequent electron acceptors. It shares a non-heme iron and each subunit binds pheophytin, quinone, additional chlorophylls, carotenoids and lipids. D1 provides most of the ligands for the Mn4-Ca-O5 cluster of the oxygen-evolving complex (OEC). There is also a Cl(-1) ion associated with D1 and D2, which is required for oxygen evolution. The PSII complex binds additional chlorophylls, carotenoids and specific lipids. serves as cofactor. Tyr-161 forms a radical intermediate that is referred to as redox-active TyrZ, YZ or Y-Z. Post-translationally, C-terminally processed by CTPA; processing is essential to allow assembly of the oxygen-evolving complex and thus photosynthetic growth.

It localises to the plastid. The protein resides in the chloroplast thylakoid membrane. It carries out the reaction 2 a plastoquinone + 4 hnu + 2 H2O = 2 a plastoquinol + O2. Its function is as follows. Photosystem II (PSII) is a light-driven water:plastoquinone oxidoreductase that uses light energy to abstract electrons from H(2)O, generating O(2) and a proton gradient subsequently used for ATP formation. It consists of a core antenna complex that captures photons, and an electron transfer chain that converts photonic excitation into a charge separation. The D1/D2 (PsbA/PsbD) reaction center heterodimer binds P680, the primary electron donor of PSII as well as several subsequent electron acceptors. This chain is Photosystem II protein D1, found in Lotus japonicus (Lotus corniculatus var. japonicus).